Consider the following 401-residue polypeptide: Zinc finger CCHC domain-containing protein 12 (401 aa).

2 disordered regions span residues 1–20 (MASILSRMGNSRGQNSPLPP) and 270–292 (DSDEDVILVEPDDPPLPSSSAGP). A compositionally biased stretch (acidic residues) spans 270–282 (DSDEDVILVEPDD). The CCHC-type zinc finger occupies 345–362 (VHCSHCGEEGHSKETCDN).

Belongs to the ZCCHC12 family. As to quaternary structure, interacts with SMAD1 and CREB-binding protein (CBP). Forms a protein-DNA complex through its association with SMAD1.

Transcriptional coactivator in the bone morphogenetic protein (BMP)-signaling pathway. It positively modulates BMP signaling by interacting with SMAD1 and associating with CBP in the transcription complex. It contributes to the BMP-induced enhancement of cholinergic-neuron-specific gene expression. The sequence is that of Zinc finger CCHC domain-containing protein 12 (Zcchc12) from Rattus norvegicus (Rat).